The following is a 409-amino-acid chain: Glycinol 4-dimethylallyltransferase (409 aa).

A chloroplast-targeting transit peptide spans 1 to 44; that stretch reads MDWGLAISSHPKPYSVTTGGNLWRSKHTTKNIYFASSWISKASR. A run of 9 helical transmembrane segments spans residues 113–133, 148–168, 200–220, 222–242, 249–269, 287–307, 330–350, 354–374, and 388–408; these read LSAFYWFSYPYTMIGITLCAF, LSFLIGVLQGVLPQLFIEIYL, VIISAAFLALSFGFTWITGSW, LICNLVVIASSWTAYSIDVPL, PFVAAMCMISTWALALPISYF, LGFLVAFMTFYSLGLALSKDI, AFWICVSFFEMAFGVGILAGA, HFWTKIFTGMGNAVLASILWY, and GSFYMFIWKLLYAGFFLMALI.

It belongs to the UbiA prenyltransferase family. Mg(2+) is required as a cofactor. Requires Mn(2+) as cofactor. The cofactor is Co(2+).

The protein localises to the plastid. It localises to the chloroplast membrane. It carries out the reaction (6aS,11aS)-3,6a,9-trihydroxypterocarpan + dimethylallyl diphosphate = (6aS,11aS)-2-dimethylallyl-3,6a,9-trihydroxypterocarpan + diphosphate. It catalyses the reaction (6aS,11aS)-3,6a,9-trihydroxypterocarpan + dimethylallyl diphosphate = (6aS,11aS)-4-dimethylallyl-3,6a,9-trihydroxypterocarpan + diphosphate. The protein operates within phytoalexin biosynthesis; pterocarpan phytoalexin biosynthesis. Its function is as follows. Proposed to be involved in the biosynthesis of pterocarpan phytoalexins, specifically glyceollins. Can act as a prenyltransferase towards glycinol which is the direct precursor of glyceollins. Seems to be specific for prenylation at C-4 thus producing glyceollin I. This is Glycinol 4-dimethylallyltransferase (G4DT) from Glycine max (Soybean).